We begin with the raw amino-acid sequence, 436 residues long: Magnesium transporter MRS2-4 (436 aa).

A disordered region spans residues 1-56; it reads MGKGPLSFRRLSSIRHRKKGSAVKDDSAQTSTPSSPPPPLPIHAGGSAVGATGKAK. The span at 12–21 shows a compositional bias: basic residues; that stretch reads SSIRHRKKGS. Over residues 44-53 the composition is skewed to low complexity; the sequence is AGGSAVGATG. 2 consecutive transmembrane segments (helical) span residues 372-392 and 405-425; these read LTLTIASFAIAAETLLASLFG and VFGYFVWSVTALCIVLFMVTL. Residues 392–394 carry the Required for magnesium transport activity motif; that stretch reads GMN.

It belongs to the CorA metal ion transporter (MIT) (TC 1.A.35.5) family. As to expression, expressed in the whole plant except roots.

Its subcellular location is the membrane. Functionally, magnesium transporter that may mediate the influx of magnesium. In Arabidopsis thaliana (Mouse-ear cress), this protein is Magnesium transporter MRS2-4 (MRS2-4).